Here is a 305-residue protein sequence, read N- to C-terminus: Serine/threonine-protein kinase 16 (305 aa).

A lipid anchor (N-myristoyl glycine) is attached at Gly-2. S-palmitoyl cysteine attachment occurs at residues Cys-6 and Cys-8. The Protein kinase domain occupies Tyr-20–Leu-293. ATP-binding positions include Leu-26–Val-34 and Lys-49. Asp-148 acts as the Proton acceptor in catalysis. An activation loop region spans residues Asp-166 to Glu-202. The residue at position 185 (Thr-185) is a Phosphothreonine; by autocatalysis. Ser-197 bears the Phosphoserine; by autocatalysis mark. Residue Tyr-198 is modified to Phosphotyrosine; by autocatalysis.

It belongs to the protein kinase superfamily. Ser/Thr protein kinase family. As to quaternary structure, monomer. Interacts with DRG1 (via its N-terminal); the interaction phosphorylates DRG1. In terms of processing, mainly autophosphorylated on serine/threonine residues. Also autophosphorylated on Tyr-198. Post-translationally, it is uncertain whether palmitoylation is on Cys-6 and/or Cys-8. As to expression, ubiquitously expressed at very low levels.

The protein resides in the cytoplasm. Its subcellular location is the perinuclear region. It is found in the membrane. The catalysed reaction is L-seryl-[protein] + ATP = O-phospho-L-seryl-[protein] + ADP + H(+). It catalyses the reaction L-threonyl-[protein] + ATP = O-phospho-L-threonyl-[protein] + ADP + H(+). The enzyme catalyses L-tyrosyl-[protein] + ATP = O-phospho-L-tyrosyl-[protein] + ADP + H(+). Functionally, membrane-associated protein kinase that phosphorylates on serine and threonine residues. In vitro substrates include DRG1, ENO1 and EIF4EBP1. Also autophosphorylates. May be involved in secretory vesicle trafficking or intracellular signaling. May have a role in regulating stromal-epithelial interactions that occur during ductal morphogenesis in the mammary gland. May be involved in TGF-beta signaling. Able to autophosphorylate on Tyr residue; it is however unclear whether it has tyrosine-protein kinase toward other proteins. The protein is Serine/threonine-protein kinase 16 (STK16) of Homo sapiens (Human).